The primary structure comprises 429 residues: Serine hydroxymethyltransferase (429 aa).

Residues Leu-125 and 129–131 (GHL) each bind (6S)-5,6,7,8-tetrahydrofolate. Position 234 is an N6-(pyridoxal phosphate)lysine (Lys-234).

The protein belongs to the SHMT family. In terms of assembly, homodimer. Pyridoxal 5'-phosphate is required as a cofactor.

It localises to the cytoplasm. It carries out the reaction (6R)-5,10-methylene-5,6,7,8-tetrahydrofolate + glycine + H2O = (6S)-5,6,7,8-tetrahydrofolate + L-serine. Its pathway is one-carbon metabolism; tetrahydrofolate interconversion. It functions in the pathway amino-acid biosynthesis; glycine biosynthesis; glycine from L-serine: step 1/1. Functionally, catalyzes the reversible interconversion of serine and glycine with tetrahydrofolate (THF) serving as the one-carbon carrier. This reaction serves as the major source of one-carbon groups required for the biosynthesis of purines, thymidylate, methionine, and other important biomolecules. Also exhibits THF-independent aldolase activity toward beta-hydroxyamino acids, producing glycine and aldehydes, via a retro-aldol mechanism. This chain is Serine hydroxymethyltransferase, found in Allorhizobium ampelinum (strain ATCC BAA-846 / DSM 112012 / S4) (Agrobacterium vitis (strain S4)).